Consider the following 459-residue polypeptide: tRNA modification GTPase MnmE (459 aa).

(6S)-5-formyl-5,6,7,8-tetrahydrofolate contacts are provided by Arg-22, Glu-85, and Arg-124. A TrmE-type G domain is found at 221–380; sequence GLSTVIVGKP…LEIQIRDLFF (160 aa). Position 231 (Asn-231) interacts with K(+). GTP is bound by residues 231-236, 250-256, and 275-278; these read NVGKSS, TEVAGTT, and DTAG. Ser-235 contributes to the Mg(2+) binding site. Residues Thr-250, Val-252, and Thr-255 each coordinate K(+). Thr-256 contacts Mg(2+). Lys-459 is a binding site for (6S)-5-formyl-5,6,7,8-tetrahydrofolate.

The protein belongs to the TRAFAC class TrmE-Era-EngA-EngB-Septin-like GTPase superfamily. TrmE GTPase family. As to quaternary structure, homodimer. Heterotetramer of two MnmE and two MnmG subunits. It depends on K(+) as a cofactor.

Its subcellular location is the cytoplasm. Functionally, exhibits a very high intrinsic GTPase hydrolysis rate. Involved in the addition of a carboxymethylaminomethyl (cmnm) group at the wobble position (U34) of certain tRNAs, forming tRNA-cmnm(5)s(2)U34. The sequence is that of tRNA modification GTPase MnmE from Staphylococcus aureus (strain bovine RF122 / ET3-1).